A 396-amino-acid chain; its full sequence is Tryptophan synthase beta chain (396 aa).

An N6-(pyridoxal phosphate)lysine modification is found at K88.

The protein belongs to the TrpB family. In terms of assembly, tetramer of two alpha and two beta chains. It depends on pyridoxal 5'-phosphate as a cofactor.

The enzyme catalyses (1S,2R)-1-C-(indol-3-yl)glycerol 3-phosphate + L-serine = D-glyceraldehyde 3-phosphate + L-tryptophan + H2O. The protein operates within amino-acid biosynthesis; L-tryptophan biosynthesis; L-tryptophan from chorismate: step 5/5. The beta subunit is responsible for the synthesis of L-tryptophan from indole and L-serine. The chain is Tryptophan synthase beta chain from Shewanella sp. (strain W3-18-1).